Reading from the N-terminus, the 171-residue chain is 3-hydroxydecanoyl-[acyl-carrier-protein] dehydratase (171 aa).

Residue histidine 70 is part of the active site.

This sequence belongs to the thioester dehydratase family. FabA subfamily. Homodimer.

Its subcellular location is the cytoplasm. It catalyses the reaction a (3R)-hydroxyacyl-[ACP] = a (2E)-enoyl-[ACP] + H2O. The catalysed reaction is (3R)-hydroxydecanoyl-[ACP] = (2E)-decenoyl-[ACP] + H2O. It carries out the reaction (2E)-decenoyl-[ACP] = (3Z)-decenoyl-[ACP]. It participates in lipid metabolism; fatty acid biosynthesis. Functionally, necessary for the introduction of cis unsaturation into fatty acids. Catalyzes the dehydration of (3R)-3-hydroxydecanoyl-ACP to E-(2)-decenoyl-ACP and then its isomerization to Z-(3)-decenoyl-ACP. Can catalyze the dehydratase reaction for beta-hydroxyacyl-ACPs with saturated chain lengths up to 16:0, being most active on intermediate chain length. The sequence is that of 3-hydroxydecanoyl-[acyl-carrier-protein] dehydratase from Shewanella pealeana (strain ATCC 700345 / ANG-SQ1).